The chain runs to 323 residues: Pyruvate dehydrogenase E1 component subunit beta (323 aa).

Glu-60 is a binding site for thiamine diphosphate. K(+) is bound by residues Ile-113, Ala-161, Ile-162, Asp-164, and Asn-166.

Heterodimer of an alpha and a beta chain. Thiamine diphosphate serves as cofactor.

The protein resides in the plastid. It is found in the chloroplast. It carries out the reaction N(6)-[(R)-lipoyl]-L-lysyl-[protein] + pyruvate + H(+) = N(6)-[(R)-S(8)-acetyldihydrolipoyl]-L-lysyl-[protein] + CO2. Functionally, the pyruvate dehydrogenase complex catalyzes the overall conversion of pyruvate to acetyl-CoA and CO(2). It contains multiple copies of three enzymatic components: pyruvate dehydrogenase (E1), dihydrolipoamide acetyltransferase (E2) and lipoamide dehydrogenase (E3). The protein is Pyruvate dehydrogenase E1 component subunit beta (pdhB) of Gracilaria tenuistipitata var. liui (Red alga).